The primary structure comprises 757 residues: Endoribonuclease ysh1 (757 aa).

The Zn(2+) site is built by His-78, His-80, Asp-82, His-83, His-165, and Asp-186. His-403 acts as the Proton donor in catalysis. His-425 lines the Zn(2+) pocket. Positions 698 to 757 are disordered; the sequence is SQNDVSEDDFENEESDDDKIFEQQTKIEDDVKNENKTEPVEEQKSEEKNEQPNLKKEELS. Residues 702–714 show a composition bias toward acidic residues; it reads VSEDDFENEESDD. The segment covering 715 to 757 has biased composition (basic and acidic residues); that stretch reads DKIFEQQTKIEDDVKNENKTEPVEEQKSEEKNEQPNLKKEELS.

Belongs to the metallo-beta-lactamase superfamily. RNA-metabolizing metallo-beta-lactamase-like family. CPSF2/YSH1 subfamily.

The protein localises to the cytoplasm. Its subcellular location is the nucleus. Component of the cleavage factor I (CF I) involved in pre-mRNA 3'-end processing. This Schizosaccharomyces pombe (strain 972 / ATCC 24843) (Fission yeast) protein is Endoribonuclease ysh1 (ysh1).